The sequence spans 186 residues: ATP synthase subunit delta (186 aa).

This sequence belongs to the ATPase delta chain family. As to quaternary structure, F-type ATPases have 2 components, F(1) - the catalytic core - and F(0) - the membrane proton channel. F(1) has five subunits: alpha(3), beta(3), gamma(1), delta(1), epsilon(1). F(0) has three main subunits: a(1), b(2) and c(10-14). The alpha and beta chains form an alternating ring which encloses part of the gamma chain. F(1) is attached to F(0) by a central stalk formed by the gamma and epsilon chains, while a peripheral stalk is formed by the delta and b chains.

It is found in the cell membrane. Functionally, f(1)F(0) ATP synthase produces ATP from ADP in the presence of a proton or sodium gradient. F-type ATPases consist of two structural domains, F(1) containing the extramembraneous catalytic core and F(0) containing the membrane proton channel, linked together by a central stalk and a peripheral stalk. During catalysis, ATP synthesis in the catalytic domain of F(1) is coupled via a rotary mechanism of the central stalk subunits to proton translocation. In terms of biological role, this protein is part of the stalk that links CF(0) to CF(1). It either transmits conformational changes from CF(0) to CF(1) or is implicated in proton conduction. This chain is ATP synthase subunit delta, found in Symbiobacterium thermophilum (strain DSM 24528 / JCM 14929 / IAM 14863 / T).